The following is a 591-amino-acid chain: Aspartate--tRNA(Asp/Asn) ligase (591 aa).

L-aspartate is bound at residue glutamate 174. The aspartate stretch occupies residues 198–201; it reads QLFK. Arginine 220 provides a ligand contact to L-aspartate. ATP-binding positions include 220–222 and glutamine 229; that span reads RDE. An L-aspartate-binding site is contributed by histidine 450. Glutamate 483 contacts ATP. Position 490 (arginine 490) interacts with L-aspartate. ATP is bound at residue 535 to 538; the sequence is GLDR.

It belongs to the class-II aminoacyl-tRNA synthetase family. Type 1 subfamily. In terms of assembly, homodimer.

It is found in the cytoplasm. The catalysed reaction is tRNA(Asx) + L-aspartate + ATP = L-aspartyl-tRNA(Asx) + AMP + diphosphate. Its function is as follows. Aspartyl-tRNA synthetase with relaxed tRNA specificity since it is able to aspartylate not only its cognate tRNA(Asp) but also tRNA(Asn). Reaction proceeds in two steps: L-aspartate is first activated by ATP to form Asp-AMP and then transferred to the acceptor end of tRNA(Asp/Asn). The protein is Aspartate--tRNA(Asp/Asn) ligase of Pseudomonas putida (strain ATCC 700007 / DSM 6899 / JCM 31910 / BCRC 17059 / LMG 24140 / F1).